The primary structure comprises 122 residues: Large ribosomal subunit protein uL14 (122 aa).

Belongs to the universal ribosomal protein uL14 family. In terms of assembly, part of the 50S ribosomal subunit. Forms a cluster with proteins L3 and L19. In the 70S ribosome, L14 and L19 interact and together make contacts with the 16S rRNA in bridges B5 and B8.

Binds to 23S rRNA. Forms part of two intersubunit bridges in the 70S ribosome. This is Large ribosomal subunit protein uL14 from Nitrosomonas europaea (strain ATCC 19718 / CIP 103999 / KCTC 2705 / NBRC 14298).